The sequence spans 423 residues: Core protease OPG083 (423 aa).

Active-site residues include His241, Asp248, and Cys328.

Belongs to the peptidase C57 family.

It is found in the virion. In terms of biological role, late protein responsible for processing most or all of the viral core and membrane proteins known to undergo morphogenesis-associated proteolysis. These proteolytic events are involved in the transformation of immature virions (IV) into mature virions (MV). Probably cleaves at least the OPG129/A3, OPG136/A10, OPG098/L4, and OPG144/A17 precursors preferentially at Ala-Gly-|-Ala motifs. Also seems to process Ala-Gly-|-Ser and Ala-Gly-|-Thr motifs. The sequence is that of Core protease OPG083 (OPG083) from Bos taurus (Bovine).